Here is a 251-residue protein sequence, read N- to C-terminus: HTH-type transcriptional regulator UlaR (251 aa).

An HTH deoR-type domain is found at 3–58 (EAQRHQILLEMLAQLGFVTVEKVVERLGISPATARRDINKLDESGKLKKVRNGAEA). Positions 20 to 39 (VTVEKVVERLGISPATARRD) form a DNA-binding region, H-T-H motif.

It is found in the cytoplasm. Functionally, represses ulaG and the ulaABCDEF operon. This chain is HTH-type transcriptional regulator UlaR, found in Shigella dysenteriae serotype 1 (strain Sd197).